A 263-amino-acid chain; its full sequence is MSGEALDEIQWKSPEFIQERGLHTGNVLEYFSLSPFYDRTSNNQQLMMQFQFQQIQIPVNTTFQQFFQEKLREMTGVVFVIAYNREPDFWIIRKQLQLDPQNAVTLQDYYIIGANVYQAPKVYDVLSSRLLSSVLQLRNSIDLLNKMTQFHVSDGGHSYNNAIHQSTSNPTQGQSSGKSISATVGNTGTTATPMTMQTPQTVGPNGPATVQSGANSAAAISKNGSTSSAESADDRKNIYLDDIPLYGRGSTVEMLGLKVNLES.

Residues 163–181 show a composition bias toward polar residues; sequence IHQSTSNPTQGQSSGKSIS. A disordered region spans residues 163–232; sequence IHQSTSNPTQ…NGSTSSAESA (70 aa). The span at 182–202 shows a compositional bias: low complexity; that stretch reads ATVGNTGTTATPMTMQTPQTV.

The protein belongs to the Mediator complex subunit 6 family. Component of the Mediator complex.

The protein resides in the nucleus. Its function is as follows. Component of the Mediator complex, a coactivator involved in the regulated transcription of nearly all RNA polymerase II-dependent genes. Mediator functions as a bridge to convey information from gene-specific regulatory proteins to the basal RNA polymerase II transcription machinery. Mediator is recruited to promoters by direct interactions with regulatory proteins and serves as a scaffold for the assembly of a functional preinitiation complex with RNA polymerase II and the general transcription factors. This chain is Mediator of RNA polymerase II transcription subunit 6 (MED6), found in Scheffersomyces stipitis (strain ATCC 58785 / CBS 6054 / NBRC 10063 / NRRL Y-11545) (Yeast).